We begin with the raw amino-acid sequence, 419 residues long: Tol-Pal system protein TolB (419 aa).

Residues 1–19 (MCNRIISLFLLLFTGQVIA) form the signal peptide.

The protein belongs to the TolB family. The Tol-Pal system is composed of five core proteins: the inner membrane proteins TolA, TolQ and TolR, the periplasmic protein TolB and the outer membrane protein Pal. They form a network linking the inner and outer membranes and the peptidoglycan layer.

The protein localises to the periplasm. Functionally, part of the Tol-Pal system, which plays a role in outer membrane invagination during cell division and is important for maintaining outer membrane integrity. This Legionella pneumophila (strain Paris) protein is Tol-Pal system protein TolB.